Here is a 392-residue protein sequence, read N- to C-terminus: Branched-chain-amino-acid aminotransferase, mitochondrial (392 aa).

The N-terminal 27 residues, 1 to 27 (MAAAALGQIWARKLLSVPWLLCGPRRY), are a transit peptide targeting the mitochondrion. Tyrosine 168 provides a ligand contact to substrate. Lysine 229 is subject to N6-(pyridoxal phosphate)lysine. An N6-acetyllysine modification is found at lysine 321.

This sequence belongs to the class-IV pyridoxal-phosphate-dependent aminotransferase family. Homodimer. The cofactor is pyridoxal 5'-phosphate. Ubiquitous.

It is found in the mitochondrion. It catalyses the reaction L-leucine + 2-oxoglutarate = 4-methyl-2-oxopentanoate + L-glutamate. It carries out the reaction L-isoleucine + 2-oxoglutarate = (S)-3-methyl-2-oxopentanoate + L-glutamate. The enzyme catalyses L-valine + 2-oxoglutarate = 3-methyl-2-oxobutanoate + L-glutamate. In terms of biological role, catalyzes the first reaction in the catabolism of the essential branched chain amino acids leucine, isoleucine, and valine. May also function as a transporter of branched chain alpha-keto acids. The polypeptide is Branched-chain-amino-acid aminotransferase, mitochondrial (BCAT2) (Homo sapiens (Human)).